The following is a 759-amino-acid chain: Polyribonucleotide nucleotidyltransferase (759 aa).

Residues aspartate 522 and aspartate 528 each coordinate Mg(2+). Residues 588 to 647 form the KH domain; the sequence is PRITTIKVPVDKIGEVIGPKGKMINSITEETGASISIEDDGTVFVGASNGEAAQAAIDKI. The S1 motif domain maps to 659 to 728; the sequence is GERFLGTVVK…NRGKISLVLV (70 aa). Positions 734–759 are disordered; the sequence is AEASDNGSATPSDKAPATADATTAGN. The segment covering 741–759 has biased composition (low complexity); sequence SATPSDKAPATADATTAGN.

The protein belongs to the polyribonucleotide nucleotidyltransferase family. Mg(2+) serves as cofactor.

Its subcellular location is the cytoplasm. The catalysed reaction is RNA(n+1) + phosphate = RNA(n) + a ribonucleoside 5'-diphosphate. Its function is as follows. Involved in mRNA degradation. Catalyzes the phosphorolysis of single-stranded polyribonucleotides processively in the 3'- to 5'-direction. The polypeptide is Polyribonucleotide nucleotidyltransferase (Mycobacterium sp. (strain JLS)).